The following is a 548-amino-acid chain: Chaperonin GroEL (548 aa).

ATP-binding positions include 30-33, lysine 51, 87-91, glycine 415, 479-481, and aspartate 495; these read TLGP, DGTTT, and NAA.

It belongs to the chaperonin (HSP60) family. In terms of assembly, forms a cylinder of 14 subunits composed of two heptameric rings stacked back-to-back. Interacts with the co-chaperonin GroES.

Its subcellular location is the cytoplasm. It carries out the reaction ATP + H2O + a folded polypeptide = ADP + phosphate + an unfolded polypeptide.. In terms of biological role, together with its co-chaperonin GroES, plays an essential role in assisting protein folding. The GroEL-GroES system forms a nano-cage that allows encapsulation of the non-native substrate proteins and provides a physical environment optimized to promote and accelerate protein folding. The chain is Chaperonin GroEL from Lawsonia intracellularis (strain PHE/MN1-00).